Consider the following 178-residue polypeptide: Cell division protein SepF (178 aa).

A compositionally biased stretch (basic and acidic residues) spans 21–46 (YESEQSVATHHDEERPQAQEREERRA). The segment at 21–65 (YESEQSVATHHDEERPQAQEREERRAPAPVREVVREMPTVDAEEE) is disordered.

Belongs to the SepF family. As to quaternary structure, homodimer. Interacts with FtsZ.

The protein resides in the cytoplasm. Cell division protein that is part of the divisome complex and is recruited early to the Z-ring. Probably stimulates Z-ring formation, perhaps through the cross-linking of FtsZ protofilaments. Its function overlaps with FtsA. The chain is Cell division protein SepF from Paenarthrobacter aurescens (strain TC1).